The chain runs to 392 residues: Probable tRNA sulfurtransferase (392 aa).

A THUMP domain is found at 59 to 166 (SCYREALKRV…DEGLFIYTTE (108 aa)). Residues 186–187 (LL), 211–212 (YF), Arg269, Gly290, and Gln299 contribute to the ATP site.

It belongs to the ThiI family.

Its subcellular location is the cytoplasm. It catalyses the reaction [ThiI sulfur-carrier protein]-S-sulfanyl-L-cysteine + a uridine in tRNA + 2 reduced [2Fe-2S]-[ferredoxin] + ATP + H(+) = [ThiI sulfur-carrier protein]-L-cysteine + a 4-thiouridine in tRNA + 2 oxidized [2Fe-2S]-[ferredoxin] + AMP + diphosphate. The enzyme catalyses [ThiS sulfur-carrier protein]-C-terminal Gly-Gly-AMP + S-sulfanyl-L-cysteinyl-[cysteine desulfurase] + AH2 = [ThiS sulfur-carrier protein]-C-terminal-Gly-aminoethanethioate + L-cysteinyl-[cysteine desulfurase] + A + AMP + 2 H(+). It participates in cofactor biosynthesis; thiamine diphosphate biosynthesis. Its function is as follows. Catalyzes the ATP-dependent transfer of a sulfur to tRNA to produce 4-thiouridine in position 8 of tRNAs, which functions as a near-UV photosensor. Also catalyzes the transfer of sulfur to the sulfur carrier protein ThiS, forming ThiS-thiocarboxylate. This is a step in the synthesis of thiazole, in the thiamine biosynthesis pathway. The sulfur is donated as persulfide by IscS. The sequence is that of Probable tRNA sulfurtransferase from Coxiella burnetii (strain RSA 493 / Nine Mile phase I).